The chain runs to 229 residues: Ribose-5-phosphate isomerase A (229 aa).

Substrate-binding positions include T28–T31, D85–D88, and K98–G101. E107 (proton acceptor) is an active-site residue. Substrate is bound at residue K125.

This sequence belongs to the ribose 5-phosphate isomerase family. In terms of assembly, homodimer.

It catalyses the reaction aldehydo-D-ribose 5-phosphate = D-ribulose 5-phosphate. The protein operates within carbohydrate degradation; pentose phosphate pathway; D-ribose 5-phosphate from D-ribulose 5-phosphate (non-oxidative stage): step 1/1. Functionally, catalyzes the reversible conversion of ribose-5-phosphate to ribulose 5-phosphate. The sequence is that of Ribose-5-phosphate isomerase A from Pyrococcus furiosus (strain ATCC 43587 / DSM 3638 / JCM 8422 / Vc1).